The primary structure comprises 310 residues: tRNA dimethylallyltransferase (310 aa).

Gly9–Thr16 is an ATP binding site. Residue Thr11–Thr16 coordinates substrate. Residues Asp34–Gln37 form an interaction with substrate tRNA region.

Belongs to the IPP transferase family. Monomer. The cofactor is Mg(2+).

It carries out the reaction adenosine(37) in tRNA + dimethylallyl diphosphate = N(6)-dimethylallyladenosine(37) in tRNA + diphosphate. In terms of biological role, catalyzes the transfer of a dimethylallyl group onto the adenine at position 37 in tRNAs that read codons beginning with uridine, leading to the formation of N6-(dimethylallyl)adenosine (i(6)A). In Pediococcus pentosaceus (strain ATCC 25745 / CCUG 21536 / LMG 10740 / 183-1w), this protein is tRNA dimethylallyltransferase.